The primary structure comprises 139 residues: uncharacterized protein (139 aa).

The span at 1–11 (MALSMSLSSDI) shows a compositional bias: polar residues. Disordered regions lie at residues 1 to 80 (MALS…AAAA) and 100 to 139 (ASSPAGEAGSWGRARRGGPRPGAPCKGLAGPPLRPGLARS). Residues 63-80 (GAGSASAGGSRLAAAAAA) show a composition bias toward low complexity.

This is an uncharacterized protein from Homo sapiens (Human).